We begin with the raw amino-acid sequence, 189 residues long: Accessory gene regulator protein B (189 aa).

5 consecutive transmembrane segments (helical) span residues 50–70, 83–103, 105–125, 143–163, and 164–184; these read VSLL…FFFI, LLCY…VGYV, VSSL…SIYA, KIKA…LNEP, and YQQL…PIFF.

It belongs to the AgrB family.

The protein resides in the cell membrane. Essential for the production of a quorum sensing system signal molecule, the autoinducing peptide (AIP). This quorum sensing system is responsible for the regulation of the expression of virulence factor genes. Involved in the proteolytic processing of AgrD, the precursor of AIP. The chain is Accessory gene regulator protein B from Staphylococcus saprophyticus subsp. saprophyticus (strain ATCC 15305 / DSM 20229 / NCIMB 8711 / NCTC 7292 / S-41).